Here is a 362-residue protein sequence, read N- to C-terminus: Sulfate/thiosulfate import ATP-binding protein CysA (362 aa).

Positions 3-237 (IEINNISKYF…PASRFVMEFL (235 aa)) constitute an ABC transporter domain. 35 to 42 (GPSGSGKT) is a binding site for ATP.

Belongs to the ABC transporter superfamily. Sulfate/tungstate importer (TC 3.A.1.6) family. The complex is composed of two ATP-binding proteins (CysA), two transmembrane proteins (CysT and CysW) and a solute-binding protein (CysP).

The protein resides in the cell inner membrane. It carries out the reaction sulfate(out) + ATP + H2O = sulfate(in) + ADP + phosphate + H(+). It catalyses the reaction thiosulfate(out) + ATP + H2O = thiosulfate(in) + ADP + phosphate + H(+). In terms of biological role, part of the ABC transporter complex CysAWTP involved in sulfate/thiosulfate import. Responsible for energy coupling to the transport system. The sequence is that of Sulfate/thiosulfate import ATP-binding protein CysA from Photorhabdus laumondii subsp. laumondii (strain DSM 15139 / CIP 105565 / TT01) (Photorhabdus luminescens subsp. laumondii).